The chain runs to 579 residues: Transcription factor COE2 (579 aa).

An interaction with DNA region spans residues 63–66 (RKSN). The segment at 149–168 (CRVLLTHEVMCSRCCEKKSC) adopts a C5-type zinc-finger fold. 2 interaction with DNA regions span residues 195-202 (NCLKTAGN) and 234-237 (NNSK). Residues 260–343 (PCIKAISPSE…KGAPGRFIYT (84 aa)) enclose the IPT/TIG domain. Disordered regions lie at residues 442–482 (GVSI…YGSN), 514–533 (AIMP…LPFS), and 549–579 (LRPQ…VPPM). A compositionally biased stretch (polar residues) spans 449–459 (GQTSGQGYTRN). Low complexity-rich tracts occupy residues 460 to 472 (SSSL…PSSS) and 521 to 533 (PGSS…LPFS).

This sequence belongs to the COE family.

It is found in the nucleus. This is Transcription factor COE2 (coe2) from Danio rerio (Zebrafish).